Reading from the N-terminus, the 119-residue chain is Protein TusC (119 aa).

The protein belongs to the DsrF/TusC family. In terms of assembly, heterohexamer, formed by a dimer of trimers. The hexameric TusBCD complex contains 2 copies each of TusB, TusC and TusD. The TusBCD complex interacts with TusE.

The protein localises to the cytoplasm. Part of a sulfur-relay system required for 2-thiolation of 5-methylaminomethyl-2-thiouridine (mnm(5)s(2)U) at tRNA wobble positions. This is Protein TusC from Escherichia coli O45:K1 (strain S88 / ExPEC).